A 174-amino-acid chain; its full sequence is Large ribosomal subunit protein uL10 (174 aa).

This sequence belongs to the universal ribosomal protein uL10 family. Part of the ribosomal stalk of the 50S ribosomal subunit. The N-terminus interacts with L11 and the large rRNA to form the base of the stalk. The C-terminus forms an elongated spine to which L12 dimers bind in a sequential fashion forming a multimeric L10(L12)X complex.

Its function is as follows. Forms part of the ribosomal stalk, playing a central role in the interaction of the ribosome with GTP-bound translation factors. The chain is Large ribosomal subunit protein uL10 from Synechococcus sp. (strain RCC307).